A 421-amino-acid chain; its full sequence is PDZ and LIM domain protein 7 (421 aa).

The 85-residue stretch at 1–85 (MEEYKVTLDG…KLGLVLSRFA (85 aa)) folds into the PDZ domain. The disordered stretch occupies residues 115 to 193 (IARPFGSGTP…STGPAVRPPW (79 aa)). The span at 147–172 (YPSSQMPQGQLQNGQKSRTVSNVSGK) shows a compositional bias: polar residues. LIM zinc-binding domains follow at residues 244-302 (PVCS…ARFA), 303-362 (PNCA…MFGT), and 363-421 (KCRG…FSNV).

It is found in the cytoplasm. Its subcellular location is the cytoskeleton. In terms of biological role, may function as a scaffold on which the coordinated assembly of proteins can occur. May play a role as an adapter that, via its PDZ domain, localizes LIM-binding proteins to actin filaments of both skeletal muscle and nonmuscle tissues. The protein is PDZ and LIM domain protein 7 (pdlim7) of Xenopus laevis (African clawed frog).